The sequence spans 232 residues: MDVRQMKIKAAELALSYVENGMRLGIGTGSTAEEFVRLLAEKVADGFKVQGVPTSERTARLCLELGVPLMSLDELPELDLTVDGADELDRHLTLIKGGGGALLREKIVAAASSRVIVIADETKLVETLGAYPLPIEINGFGGIATRISIEKAAAKLGLSGTIGLRMSGDDLFMTDGGHYILDASFGRIPDAVALSQALHAIPGVVEHGLFIGMASLAVVAGSDGARVIEPVA.

Substrate contacts are provided by residues 28–31, 83–86, and 96–99; these read TGST, DGAD, and KGGG. E105 (proton acceptor) is an active-site residue. K123 contributes to the substrate binding site.

The protein belongs to the ribose 5-phosphate isomerase family. Homodimer.

The enzyme catalyses aldehydo-D-ribose 5-phosphate = D-ribulose 5-phosphate. It functions in the pathway carbohydrate degradation; pentose phosphate pathway; D-ribose 5-phosphate from D-ribulose 5-phosphate (non-oxidative stage): step 1/1. In terms of biological role, catalyzes the reversible conversion of ribose-5-phosphate to ribulose 5-phosphate. The sequence is that of Ribose-5-phosphate isomerase A from Allorhizobium ampelinum (strain ATCC BAA-846 / DSM 112012 / S4) (Agrobacterium vitis (strain S4)).